The following is a 223-amino-acid chain: Deoxyribose-phosphate aldolase (223 aa).

D91 acts as the Proton donor/acceptor in catalysis. The Schiff-base intermediate with acetaldehyde role is filled by K154. The active-site Proton donor/acceptor is K183.

Belongs to the DeoC/FbaB aldolase family. DeoC type 1 subfamily.

The protein resides in the cytoplasm. It carries out the reaction 2-deoxy-D-ribose 5-phosphate = D-glyceraldehyde 3-phosphate + acetaldehyde. It functions in the pathway carbohydrate degradation; 2-deoxy-D-ribose 1-phosphate degradation; D-glyceraldehyde 3-phosphate and acetaldehyde from 2-deoxy-alpha-D-ribose 1-phosphate: step 2/2. Its function is as follows. Catalyzes a reversible aldol reaction between acetaldehyde and D-glyceraldehyde 3-phosphate to generate 2-deoxy-D-ribose 5-phosphate. This is Deoxyribose-phosphate aldolase from Lysinibacillus sphaericus (strain C3-41).